Reading from the N-terminus, the 298-residue chain is N-acetylmuramic acid 6-phosphate etherase (298 aa).

In terms of domain architecture, SIS spans 55-218; it reads IHAQVSGGGR…STGLMIKSGK (164 aa). Residue glutamate 83 is the Proton donor of the active site. Glutamate 114 is a catalytic residue.

Belongs to the GCKR-like family. MurNAc-6-P etherase subfamily. In terms of assembly, homodimer.

The enzyme catalyses N-acetyl-D-muramate 6-phosphate + H2O = N-acetyl-D-glucosamine 6-phosphate + (R)-lactate. The protein operates within amino-sugar metabolism; 1,6-anhydro-N-acetylmuramate degradation. It participates in amino-sugar metabolism; N-acetylmuramate degradation. It functions in the pathway cell wall biogenesis; peptidoglycan recycling. Its function is as follows. Specifically catalyzes the cleavage of the D-lactyl ether substituent of MurNAc 6-phosphate, producing GlcNAc 6-phosphate and D-lactate. Together with AnmK, is also required for the utilization of anhydro-N-acetylmuramic acid (anhMurNAc) either imported from the medium or derived from its own cell wall murein, and thus plays a role in cell wall recycling. In Escherichia coli O81 (strain ED1a), this protein is N-acetylmuramic acid 6-phosphate etherase.